A 294-amino-acid polypeptide reads, in one-letter code: Glyceraldehyde-3-phosphate dehydrogenase (294 aa).

NAD(+) contacts are provided by aspartate 19, lysine 63, and threonine 105. Residues 134–136 (SCT), threonine 165, 194–195 (TG), and arginine 217 contribute to the D-glyceraldehyde 3-phosphate site. Cysteine 135 acts as the Nucleophile in catalysis.

It belongs to the glyceraldehyde-3-phosphate dehydrogenase family. In terms of assembly, homotetramer.

The protein resides in the cytoplasm. It catalyses the reaction D-glyceraldehyde 3-phosphate + phosphate + NAD(+) = (2R)-3-phospho-glyceroyl phosphate + NADH + H(+). It functions in the pathway carbohydrate degradation; glycolysis; pyruvate from D-glyceraldehyde 3-phosphate: step 1/5. Functionally, catalyzes the oxidative phosphorylation of glyceraldehyde 3-phosphate (G3P) to 1,3-bisphosphoglycerate (BPG) using the cofactor NAD. The first reaction step involves the formation of a hemiacetal intermediate between G3P and a cysteine residue, and this hemiacetal intermediate is then oxidized to a thioester, with concomitant reduction of NAD to NADH. The reduced NADH is then exchanged with the second NAD, and the thioester is attacked by a nucleophilic inorganic phosphate to produce BPG. The protein is Glyceraldehyde-3-phosphate dehydrogenase (gap) of Klebsiella aerogenes (Enterobacter aerogenes).